The primary structure comprises 131 residues: Small ribosomal subunit protein uS11 (131 aa).

The protein belongs to the universal ribosomal protein uS11 family. As to quaternary structure, part of the 30S ribosomal subunit. Interacts with proteins S7 and S18. Binds to IF-3.

Functionally, located on the platform of the 30S subunit, it bridges several disparate RNA helices of the 16S rRNA. Forms part of the Shine-Dalgarno cleft in the 70S ribosome. The sequence is that of Small ribosomal subunit protein uS11 from Clostridium novyi (strain NT).